The chain runs to 100 residues: Small ribosomal subunit protein uS14m (100 aa).

This sequence belongs to the universal ribosomal protein uS14 family.

It localises to the mitochondrion. This chain is Small ribosomal subunit protein uS14m (RPS14), found in Brassica napus (Rape).